Consider the following 69-residue polypeptide: DNA-directed RNA polymerase subunit omega (69 aa).

The protein belongs to the RNA polymerase subunit omega family. As to quaternary structure, the RNAP catalytic core consists of 2 alpha, 1 beta, 1 beta' and 1 omega subunit. When a sigma factor is associated with the core the holoenzyme is formed, which can initiate transcription.

The enzyme catalyses RNA(n) + a ribonucleoside 5'-triphosphate = RNA(n+1) + diphosphate. Its function is as follows. Promotes RNA polymerase assembly. Latches the N- and C-terminal regions of the beta' subunit thereby facilitating its interaction with the beta and alpha subunits. This is DNA-directed RNA polymerase subunit omega from Exiguobacterium sp. (strain ATCC BAA-1283 / AT1b).